A 430-amino-acid chain; its full sequence is Serine--tRNA ligase (430 aa).

Threonine 237–glutamate 239 contributes to the L-serine binding site. ATP is bound at residue arginine 268–glutamate 270. Position 291 (glutamate 291) interacts with L-serine. ATP is bound at residue glutamate 355–serine 358. Serine 391 contributes to the L-serine binding site.

The protein belongs to the class-II aminoacyl-tRNA synthetase family. Type-1 seryl-tRNA synthetase subfamily. Homodimer. The tRNA molecule binds across the dimer.

Its subcellular location is the cytoplasm. The catalysed reaction is tRNA(Ser) + L-serine + ATP = L-seryl-tRNA(Ser) + AMP + diphosphate + H(+). It carries out the reaction tRNA(Sec) + L-serine + ATP = L-seryl-tRNA(Sec) + AMP + diphosphate + H(+). Its pathway is aminoacyl-tRNA biosynthesis; selenocysteinyl-tRNA(Sec) biosynthesis; L-seryl-tRNA(Sec) from L-serine and tRNA(Sec): step 1/1. Catalyzes the attachment of serine to tRNA(Ser). Is also able to aminoacylate tRNA(Sec) with serine, to form the misacylated tRNA L-seryl-tRNA(Sec), which will be further converted into selenocysteinyl-tRNA(Sec). The protein is Serine--tRNA ligase of Salmonella heidelberg (strain SL476).